Consider the following 399-residue polypeptide: S-adenosylmethionine synthase (399 aa).

Histidine 17 serves as a coordination point for ATP. Aspartate 19 provides a ligand contact to Mg(2+). Glutamate 45 contacts K(+). Residues glutamate 58 and glutamine 101 each coordinate L-methionine. The interval 101 to 111 (QSPDIAQGVDK) is flexible loop. ATP is bound by residues 176–178 (DGK), 243–244 (RF), aspartate 252, 258–259 (RK), and lysine 279. Aspartate 252 serves as a coordination point for L-methionine. Position 283 (lysine 283) interacts with L-methionine.

Belongs to the AdoMet synthase family. Homotetramer; dimer of dimers. Mg(2+) serves as cofactor. It depends on K(+) as a cofactor.

It is found in the cytoplasm. It carries out the reaction L-methionine + ATP + H2O = S-adenosyl-L-methionine + phosphate + diphosphate. It participates in amino-acid biosynthesis; S-adenosyl-L-methionine biosynthesis; S-adenosyl-L-methionine from L-methionine: step 1/1. Functionally, catalyzes the formation of S-adenosylmethionine (AdoMet) from methionine and ATP. The overall synthetic reaction is composed of two sequential steps, AdoMet formation and the subsequent tripolyphosphate hydrolysis which occurs prior to release of AdoMet from the enzyme. The polypeptide is S-adenosylmethionine synthase (Staphylococcus epidermidis (strain ATCC 35984 / DSM 28319 / BCRC 17069 / CCUG 31568 / BM 3577 / RP62A)).